A 127-amino-acid polypeptide reads, in one-letter code: Small ribosomal subunit protein eS8 (127 aa).

This sequence belongs to the eukaryotic ribosomal protein eS8 family. As to quaternary structure, part of the 30S ribosomal subunit.

The chain is Small ribosomal subunit protein eS8 from Pyrococcus furiosus (strain ATCC 43587 / DSM 3638 / JCM 8422 / Vc1).